The sequence spans 349 residues: Protein RAE1 (349 aa).

A disordered region spans residues 1–21; it reads MATFGAPATANSNPNKSYEVT. An N-acetylalanine modification is found at Ala2. Residues 9 to 21 show a composition bias toward polar residues; the sequence is TANSNPNKSYEVT. WD repeat units lie at residues 23–62, 70–109, 112–151, 153–190, and 244–283; these read SPADSISSLSFSPRADILVATSWDNQVRCWEISRSGASLA, SHDQPVLCSAWKDDGTTVFSGGCDKQAKMWPLLSGGQPVT, MHEGPIAAMAWIPGMNLLATGSWDKTLKYWDTRQQNPVHT, QLPDKCYTLSVKHPLMVVGTADRNLIVFNLQNPQTEFK, and NDIYSVNSLNFHPVHGTFATAGSDGAFNFWDKDSKQRLKA. The DWD box signature appears at 128-144; sequence LLATGSWDKTLKYWDTR.

The protein belongs to the WD repeat rae1 family. Part of the nuclear pore complex (NPC). The NPC has an eight-fold symmetrical structure comprising a central transport channel and two rings, the cytoplasmic and nuclear rings, to which eight filaments are attached. The cytoplasmic filaments have loose ends, while the nuclear filaments are joined in a distal ring, forming a nuclear basket. NPCs are highly dynamic in configuration and composition, and can be devided in 3 subcomplexes, the NUP62 subcomplex, the NUP107-160 subcomplex and the NUP93 subcomplex, containing approximately 30 different nucleoporin proteins. Interacts with DDB1A.

It is found in the nucleus envelope. The protein localises to the nucleus. Its subcellular location is the nuclear pore complex. In Arabidopsis thaliana (Mouse-ear cress), this protein is Protein RAE1.